A 242-amino-acid polypeptide reads, in one-letter code: DNA repair protein RecO (242 aa).

Belongs to the RecO family. As to quaternary structure, monomer.

Involved in DNA repair and RecF pathway recombination. In Shigella boydii serotype 18 (strain CDC 3083-94 / BS512), this protein is DNA repair protein RecO.